Consider the following 124-residue polypeptide: Small ribosomal subunit protein bS6 (124 aa).

Residues 96 to 124 are disordered; it reads ETGPSPMMKEVQREEAKKSAATQPSEAQA. Residues 115–124 are compositionally biased toward polar residues; it reads AATQPSEAQA.

Belongs to the bacterial ribosomal protein bS6 family.

Binds together with bS18 to 16S ribosomal RNA. This Paraburkholderia phytofirmans (strain DSM 17436 / LMG 22146 / PsJN) (Burkholderia phytofirmans) protein is Small ribosomal subunit protein bS6.